The following is a 118-amino-acid chain: Large ribosomal subunit protein eL18 (118 aa).

The protein belongs to the eukaryotic ribosomal protein eL18 family.

This is Large ribosomal subunit protein eL18 from Nanoarchaeum equitans (strain Kin4-M).